We begin with the raw amino-acid sequence, 267 residues long: Shikimate dehydrogenase (NADP(+)) (267 aa).

Shikimate contacts are provided by residues 14–16 (SLS) and threonine 61. Lysine 65 serves as the catalytic Proton acceptor. Shikimate-binding residues include asparagine 86 and aspartate 101. NADP(+) contacts are provided by residues 126–130 (GAGGA), 150–155 (NRTPFK), and leucine 213. Shikimate is bound at residue tyrosine 215. NADP(+) is bound at residue glycine 236.

The protein belongs to the shikimate dehydrogenase family. As to quaternary structure, homodimer.

It catalyses the reaction shikimate + NADP(+) = 3-dehydroshikimate + NADPH + H(+). It participates in metabolic intermediate biosynthesis; chorismate biosynthesis; chorismate from D-erythrose 4-phosphate and phosphoenolpyruvate: step 4/7. Its function is as follows. Involved in the biosynthesis of the chorismate, which leads to the biosynthesis of aromatic amino acids. Catalyzes the reversible NADPH linked reduction of 3-dehydroshikimate (DHSA) to yield shikimate (SA). The sequence is that of Shikimate dehydrogenase (NADP(+)) from Ruthia magnifica subsp. Calyptogena magnifica.